Reading from the N-terminus, the 97-residue chain is Peptide Y (97 aa).

The signal sequence occupies residues 1-28 (MANMLRSWMMLAALAVCLLVCLSSFADA). Tyrosine 64 carries the tyrosine amide modification. Residues 68 to 97 (STPEQAVAWLLFGADSSQDAEPRLDYSDQW) constitute a propeptide, C-terminal extension.

This sequence belongs to the NPY family.

It localises to the secreted. The chain is Peptide Y from Dicentrarchus labrax (European seabass).